We begin with the raw amino-acid sequence, 699 residues long: Endoplasmic reticulum mannosyl-oligosaccharide 1,2-alpha-mannosidase (699 aa).

Over 1–84 the chain is Cytoplasmic; that stretch reads MAACEGRRSG…WKQLSRLQRN (84 aa). A helical; Signal-anchor for type II membrane protein transmembrane segment spans residues 85–105; sequence MILFLLAFLLFCGLLFYINLA. Over 106-699 the chain is Lumenal; sequence DHWKALAFRL…AHPLPIWTPA (594 aa). The disordered stretch occupies residues 125–243; it reads IAGLKPANPP…LPPARTQGTP (119 aa). The segment covering 176–201 has biased composition (basic and acidic residues); it reads DLKDGTQEEATKRQEAPVDPRPEGDP. E330 functions as the Proton donor in the catalytic mechanism. D463 is a catalytic residue. An intrachain disulfide couples C527 to C556. The active-site Proton donor is the E570. Residue E599 is part of the active site. Position 688 (T688) interacts with Ca(2+).

This sequence belongs to the glycosyl hydrolase 47 family. The cofactor is Ca(2+). Widely expressed.

It localises to the endoplasmic reticulum membrane. The enzyme catalyses N(4)-(alpha-D-Man-(1-&gt;2)-alpha-D-Man-(1-&gt;2)-alpha-D-Man-(1-&gt;3)-[alpha-D-Man-(1-&gt;2)-alpha-D-Man-(1-&gt;3)-[alpha-D-Man-(1-&gt;2)-alpha-D-Man-(1-&gt;6)]-alpha-D-Man-(1-&gt;6)]-beta-D-Man-(1-&gt;4)-beta-D-GlcNAc-(1-&gt;4)-beta-D-GlcNAc)-L-asparaginyl-[protein] (N-glucan mannose isomer 9A1,2,3B1,2,3) + 4 H2O = N(4)-(alpha-D-Man-(1-&gt;3)-[alpha-D-Man-(1-&gt;3)-[alpha-D-Man-(1-&gt;6)]-alpha-D-Man-(1-&gt;6)]-beta-D-Man-(1-&gt;4)-beta-D-GlcNAc-(1-&gt;4)-beta-D-GlcNAc)-L-asparaginyl-[protein] (N-glucan mannose isomer 5A1,2) + 4 beta-D-mannose. It catalyses the reaction N(4)-(alpha-D-Man-(1-&gt;2)-alpha-D-Man-(1-&gt;2)-alpha-D-Man-(1-&gt;3)-[alpha-D-Man-(1-&gt;3)-[alpha-D-Man-(1-&gt;2)-alpha-D-Man-(1-&gt;6)]-alpha-D-Man-(1-&gt;6)]-beta-D-Man-(1-&gt;4)-beta-D-GlcNAc-(1-&gt;4)-beta-D-GlcNAc)-L-asparaginyl-[protein] (N-glucan mannose isomer 8A1,2,3B1,3) + 3 H2O = N(4)-(alpha-D-Man-(1-&gt;3)-[alpha-D-Man-(1-&gt;3)-[alpha-D-Man-(1-&gt;6)]-alpha-D-Man-(1-&gt;6)]-beta-D-Man-(1-&gt;4)-beta-D-GlcNAc-(1-&gt;4)-beta-D-GlcNAc)-L-asparaginyl-[protein] (N-glucan mannose isomer 5A1,2) + 3 beta-D-mannose. It functions in the pathway protein modification; protein glycosylation. Inhibited by both 1-deoxymannojirimycin (dMNJ) and kifunensine. Its function is as follows. Involved in glycoprotein quality control targeting of misfolded glycoproteins for degradation. It primarily trims a single alpha-1,2-linked mannose residue from Man(9)GlcNAc(2) to produce Man(8)GlcNAc(2), but at high enzyme concentrations, as found in the ER quality control compartment (ERQC), it further trims the carbohydrates to Man(5-6)GlcNAc(2). The polypeptide is Endoplasmic reticulum mannosyl-oligosaccharide 1,2-alpha-mannosidase (MAN1B1) (Homo sapiens (Human)).